Reading from the N-terminus, the 238-residue chain is Pyridoxine 5'-phosphate synthase (238 aa).

Residues N7 and R18 each coordinate 3-amino-2-oxopropyl phosphate. H43 acts as the Proton acceptor in catalysis. 1-deoxy-D-xylulose 5-phosphate is bound by residues R45 and H50. The active-site Proton acceptor is E70. A 1-deoxy-D-xylulose 5-phosphate-binding site is contributed by T100. The Proton donor role is filled by H190. 3-amino-2-oxopropyl phosphate contacts are provided by residues D191 and 213–214 (GH).

This sequence belongs to the PNP synthase family. In terms of assembly, homooctamer; tetramer of dimers.

It localises to the cytoplasm. The enzyme catalyses 3-amino-2-oxopropyl phosphate + 1-deoxy-D-xylulose 5-phosphate = pyridoxine 5'-phosphate + phosphate + 2 H2O + H(+). The protein operates within cofactor biosynthesis; pyridoxine 5'-phosphate biosynthesis; pyridoxine 5'-phosphate from D-erythrose 4-phosphate: step 5/5. Its function is as follows. Catalyzes the complicated ring closure reaction between the two acyclic compounds 1-deoxy-D-xylulose-5-phosphate (DXP) and 3-amino-2-oxopropyl phosphate (1-amino-acetone-3-phosphate or AAP) to form pyridoxine 5'-phosphate (PNP) and inorganic phosphate. The protein is Pyridoxine 5'-phosphate synthase of Parabacteroides distasonis (strain ATCC 8503 / DSM 20701 / CIP 104284 / JCM 5825 / NCTC 11152).